The primary structure comprises 238 residues: Probable transcriptional regulatory protein YeeN (238 aa).

It belongs to the TACO1 family. YeeN subfamily.

The protein localises to the cytoplasm. In Escherichia coli (strain UTI89 / UPEC), this protein is Probable transcriptional regulatory protein YeeN.